Reading from the N-terminus, the 403-residue chain is Leu/Ile/Val-binding protein homolog 8 (403 aa).

The first 26 residues, 1 to 26, serve as a signal peptide directing secretion; it reads MRLSRLLIGASLGVALSSTVFTAALA.

It belongs to the leucine-binding protein family.

Component of an amino-acid transport system. This Brucella melitensis biotype 1 (strain ATCC 23456 / CCUG 17765 / NCTC 10094 / 16M) protein is Leu/Ile/Val-binding protein homolog 8.